Consider the following 458-residue polypeptide: Ribulose bisphosphate carboxylase (458 aa).

Asn111 serves as a coordination point for substrate. The active-site Proton acceptor is the Lys166. Residue Lys168 participates in substrate binding. Mg(2+) contacts are provided by Lys191, Asp193, and Glu194. Lys191 is modified (N6-carboxylysine). His287 serves as the catalytic Proton acceptor. 3 residues coordinate substrate: Arg288, His321, and Ser368.

It belongs to the RuBisCO large chain family. Type II subfamily. Homodimer. Mg(2+) serves as cofactor.

It catalyses the reaction 2 (2R)-3-phosphoglycerate + 2 H(+) = D-ribulose 1,5-bisphosphate + CO2 + H2O. The enzyme catalyses D-ribulose 1,5-bisphosphate + O2 = 2-phosphoglycolate + (2R)-3-phosphoglycerate + 2 H(+). RuBisCO catalyzes two reactions: the carboxylation of D-ribulose 1,5-bisphosphate, the primary event in carbon dioxide fixation, as well as the oxidative fragmentation of the pentose substrate. Both reactions occur simultaneously and in competition at the same active site. This Rhodobacter capsulatus (Rhodopseudomonas capsulata) protein is Ribulose bisphosphate carboxylase (cbbM).